A 79-amino-acid polypeptide reads, in one-letter code: Putative defensin-like protein 203 (79 aa).

The N-terminal stretch at 1–27 (MAKLIVNFSALLMIILLVSNGLPKAVA) is a signal peptide. 4 disulfides stabilise this stretch: Cys30–Cys79, Cys40–Cys64, Cys49–Cys73, and Cys53–Cys75.

It belongs to the DEFL family.

It is found in the secreted. The chain is Putative defensin-like protein 203 from Arabidopsis thaliana (Mouse-ear cress).